A 362-amino-acid polypeptide reads, in one-letter code: Neutral protease 2 homolog MEP2 (362 aa).

The first 19 residues, 1–19 (MLFPSIVAALAALANPVLS), serve as a signal peptide directing secretion. Residues 20–177 (LTIPQATGSE…SKAINPISAR (158 aa)) constitute a propeptide that is removed on maturation. Cystine bridges form between Cys-184/Cys-255 and Cys-262/Cys-280. His-304 provides a ligand contact to Zn(2+). The active site involves Glu-305. Positions 308 and 319 each coordinate Zn(2+).

Belongs to the peptidase M35 family. The cofactor is Zn(2+).

Its subcellular location is the secreted. It carries out the reaction Preferential cleavage of bonds with hydrophobic residues in P1'. Also 3-Asn-|-Gln-4 and 8-Gly-|-Ser-9 bonds in insulin B chain.. Functionally, secreted metalloproteinase that allows assimilation of proteinaceous substrates. Shows high activities on basic nuclear substrates such as histone and protamine. May be involved in virulence. The polypeptide is Neutral protease 2 homolog MEP2 (MEP2) (Coccidioides posadasii (strain C735) (Valley fever fungus)).